The primary structure comprises 258 residues: MELDSLNTKPLRILISNDDGVHAQGIHALADELRSIAEVIIVAPDRNRSGASNSLTLEQPLRVSEIAPNTYSVQGTPTDCVHFALNELMKDDLPDLVLSGINHGANLGDDVLYSGTVAAAMEGHFLGVQAIAFSLVGKRHFESAAKIARQLVEQHLAAPIPTNRLLNVNVPDLPLESLGEIEVTRLGARHHAENMIKQKDPRGHDIYWLGPPGKEQDAGEGTDFYAIEHGRVSITPLQVDLTAHESLRAMDSWLKEEK.

4 residues coordinate a divalent metal cation: Asp18, Asp19, Ser49, and Asn102.

It belongs to the SurE nucleotidase family. A divalent metal cation serves as cofactor.

It is found in the cytoplasm. It carries out the reaction a ribonucleoside 5'-phosphate + H2O = a ribonucleoside + phosphate. In terms of biological role, nucleotidase that shows phosphatase activity on nucleoside 5'-monophosphates. The chain is 5'-nucleotidase SurE from Vibrio parahaemolyticus serotype O3:K6 (strain RIMD 2210633).